The sequence spans 188 residues: Nicotinamide/nicotinic acid mononucleotide adenylyltransferase (188 aa).

This sequence belongs to the archaeal NMN adenylyltransferase family.

The catalysed reaction is beta-nicotinamide D-ribonucleotide + ATP + H(+) = diphosphate + NAD(+). The enzyme catalyses nicotinate beta-D-ribonucleotide + ATP + H(+) = deamido-NAD(+) + diphosphate. Its pathway is cofactor biosynthesis; NAD(+) biosynthesis; NAD(+) from nicotinamide D-ribonucleotide: step 1/1. The protein operates within cofactor biosynthesis; NAD(+) biosynthesis; deamido-NAD(+) from nicotinate D-ribonucleotide: step 1/1. Functionally, dual substrate specificity enzyme that catalyzes the formation of NAD(+) from nicotinamide mononucleotide (NMN) and the formation of deamido-NAD(+) (NaAD) from nicotinate mononucleotide (NaMN). Shows nearly identical catalytic efficiency for both physiological substrates. Plays an essential role in all three routes of NAD biogenesis, de novo synthesis as well as the deamidating and nondeamidating salvage pathways. The sequence is that of Nicotinamide/nicotinic acid mononucleotide adenylyltransferase from Acinetobacter baylyi (strain ATCC 33305 / BD413 / ADP1).